A 180-amino-acid chain; its full sequence is Large ribosomal subunit protein uL5 (180 aa).

It belongs to the universal ribosomal protein uL5 family. In terms of assembly, part of the 50S ribosomal subunit; part of the 5S rRNA/L5/L18/L25 subcomplex. Contacts the 5S rRNA and the P site tRNA. Forms a bridge to the 30S subunit in the 70S ribosome.

This is one of the proteins that bind and probably mediate the attachment of the 5S RNA into the large ribosomal subunit, where it forms part of the central protuberance. In the 70S ribosome it contacts protein S13 of the 30S subunit (bridge B1b), connecting the 2 subunits; this bridge is implicated in subunit movement. Contacts the P site tRNA; the 5S rRNA and some of its associated proteins might help stabilize positioning of ribosome-bound tRNAs. This Xanthomonas axonopodis pv. citri (strain 306) protein is Large ribosomal subunit protein uL5.